The primary structure comprises 197 residues: MSDNHEEESNVPAYVPGKHVSVDQLKQQDAEDEALKRYKESLLGTGVHAPKDDPRKLVIKEMKIQIEGRPDTIYPLDTKELIKEMKTKPFVLKESCHYKITLTFNIQHDIVSGLKQTNTVYRKGIKVSTEKHMLGSFAPQALAHSVTNPRHGWEEAPSGMLARGSYTAKVVFTDDDNEEHLSVEYAFSIKSDWKSDD.

Belongs to the Rho GDI family. As to quaternary structure, interacts with rac1A, rac1B, rac1C, racB, raCC and RacE.

It localises to the cytoplasm. Functionally, regulates the GDP/GTP exchange reaction of the Rho proteins by inhibiting the dissociation of GDP from them, and the subsequent binding of GTP to them. Regulates the Rac-dependent signaling pathways controlling cytokinesis, actin reorganization and the contractile vacuole. Required for efficient accumulation of cap at the cell cortex. The protein is Putative rho GDP-dissociation inhibitor 1 (rdiA) of Dictyostelium discoideum (Social amoeba).